The chain runs to 118 residues: Large ribosomal subunit protein bL20 (118 aa).

It belongs to the bacterial ribosomal protein bL20 family.

Functionally, binds directly to 23S ribosomal RNA and is necessary for the in vitro assembly process of the 50S ribosomal subunit. It is not involved in the protein synthesizing functions of that subunit. This is Large ribosomal subunit protein bL20 from Thermotoga petrophila (strain ATCC BAA-488 / DSM 13995 / JCM 10881 / RKU-1).